A 41-amino-acid chain; its full sequence is Photosystem I reaction center subunit IX (41 aa).

A helical transmembrane segment spans residues 7-27; sequence YLSTAPVVAAAWFTFTAGLLI.

The protein belongs to the PsaJ family.

It is found in the plastid. The protein resides in the chloroplast thylakoid membrane. In terms of biological role, may help in the organization of the PsaE and PsaF subunits. The chain is Photosystem I reaction center subunit IX from Oltmannsiellopsis viridis (Marine flagellate).